The sequence spans 373 residues: Melanoma-associated antigen C2 (373 aa).

The tract at residues 1 to 102 (MPPVPGVPFR…QGPSQSPLSS (102 aa)) is disordered. Low complexity predominate over residues 40–60 (SSASSTLYLVFSPSSFSTSSS). Residues 85 to 94 (SSPPQGPPQG) are compositionally biased toward pro residues. The interval 135–373 (SSFTYTLDEK…VMSSNVSFSE (239 aa)) is interaction with TRIM28. Residues 141 to 336 (LDEKVAELVE…SSFPSWYKDA (196 aa)) form the MAGE domain.

In terms of assembly, interacts with TRIM28 and UBE2H. Not expressed in normal tissues, except in germ cells in the seminiferous tubules and in Purkinje cells of the cerebellum. Expressed in various tumors, including melanoma, lymphoma, as well as pancreatic cancer, mammary gland cancer, non-small cell lung cancer and liver cancer. In hepatocellular carcinoma, there is an inverse correlation between tumor differentiation and protein expression, i.e. the lower the differentiation, the higher percentage of expression.

It is found in the cytoplasm. The protein resides in the nucleus. Its function is as follows. Proposed to enhance ubiquitin ligase activity of RING-type zinc finger-containing E3 ubiquitin-protein ligases. In vitro enhances ubiquitin ligase activity of TRIM28 and stimulates p53/TP53 ubiquitination in presence of Ubl-conjugating enzyme UBE2H leading to p53/TP53 degradation. Proposed to act through recruitment and/or stabilization of the Ubl-conjugating enzymes (E2) at the E3:substrate complex. This is Melanoma-associated antigen C2 (MAGEC2) from Homo sapiens (Human).